The primary structure comprises 313 residues: MTFEEITNKILVKDKDYEMPFSKGLLTRSLTAAGMKPSESYILAREIERDLTDQGLRKISKDELRRRVYYALINRDYEDIAEKYLLWRRVLKKHSIIILVGGASGVGTSTIAFELASRLGIPSVIGTDSIREVMRRSISKDLVPMLYESSYTAWKALRHSSAEEYDTKEMHLLGFERHVEPVLIGIESIIDRSLTEGMSVILEGTHIVPGLLGEKYHSMQNVIILNLTLSSEEIHKQRFVARAKVSDRPLERYLSNFEIIKEINEYIVKKSRENKVPVIENVSISETVQKCLEIVTDRFVDLNEESEADSEIY.

The ATP-cone domain occupies 8–95 (NKILVKDKDY…LWRRVLKKHS (88 aa)).

This sequence belongs to the 2-phosphoglycerate kinase family. A divalent metal cation serves as cofactor.

It catalyses the reaction (2R)-2-phosphoglycerate + ATP = (2R)-2,3-bisphosphoglycerate + ADP + H(+). It functions in the pathway thermoadapter biosynthesis; cyclic 2,3-diphosphoglycerate biosynthesis; cyclic 2,3-diphosphoglycerate from 2-phospho-D-glycerate: step 1/2. In terms of biological role, catalyzes the phosphorylation of 2-phosphoglycerate to 2,3-diphosphoglycerate. Involved in the biosynthesis of cyclic 2,3-bisphosphoglycerate, a thermoprotectant. This Methanococcus vannielii (strain ATCC 35089 / DSM 1224 / JCM 13029 / OCM 148 / SB) protein is 2-phosphoglycerate kinase.